The sequence spans 197 residues: Imidazoleglycerol-phosphate dehydratase (197 aa).

Belongs to the imidazoleglycerol-phosphate dehydratase family.

It is found in the cytoplasm. It catalyses the reaction D-erythro-1-(imidazol-4-yl)glycerol 3-phosphate = 3-(imidazol-4-yl)-2-oxopropyl phosphate + H2O. It participates in amino-acid biosynthesis; L-histidine biosynthesis; L-histidine from 5-phospho-alpha-D-ribose 1-diphosphate: step 6/9. This chain is Imidazoleglycerol-phosphate dehydratase, found in Xanthobacter autotrophicus (strain ATCC BAA-1158 / Py2).